Consider the following 555-residue polypeptide: Heterochromatin protein 1-binding protein 3 (555 aa).

Ala-2 bears the N-acetylalanine mark. Ser-6 carries the phosphoserine modification. Positions 29 to 134 (KLGEKVEDNT…KEKKVKKTIP (106 aa)) are disordered. Thr-51 is subject to Phosphothreonine. A compositionally biased stretch (basic and acidic residues) spans 51–67 (TPPKSKLAEGVEEKPEP). Lys-64 participates in a covalent cross-link: Glycyl lysine isopeptide (Lys-Gly) (interchain with G-Cter in SUMO2). Residue Thr-85 is modified to Phosphothreonine. Residue Lys-97 forms a Glycyl lysine isopeptide (Lys-Gly) (interchain with G-Cter in SUMO2) linkage. Basic and acidic residues predominate over residues 100–127 (PENEEKEENKPSEETKKDEKDQSKEKEK). Phosphoserine is present on residues Ser-142, Ser-155, and Ser-156. Residues 157–232 (PRPKMDAILT…GASGSFVVVQ (76 aa)) form the H15 1 domain. Lys-190 is subject to N6-acetyllysine. The segment at 227-254 (SFVVVQKSRKPPQKSRNRKNRSSAVDPE) is disordered. The span at 233-247 (KSRKPPQKSRNRKNR) shows a compositional bias: basic residues. Phosphoserine is present on residues Ser-248 and Ser-249. H15 domains lie at 255-330 (PQVK…QLKK) and 337-413 (LGGS…QLCF). A Glycyl lysine isopeptide (Lys-Gly) (interchain with G-Cter in SUMO2) cross-link involves residue Lys-258. Residues 422-555 (LFPKKEPDDS…TMKKSFKAKK (134 aa)) form a disordered region. Over residues 430 to 452 (DSKDEDEDEDEDDSSEEDSEDEE) the composition is skewed to acidic residues. A phosphoserine mark is found at Ser-443, Ser-444, and Ser-448. Over residues 491 to 512 (GKTRPLPKKAPPKAKSPAKKAR) the composition is skewed to basic residues. The segment covering 513 to 532 (PSPSVIKKPSGSSSKKPAAS) has biased composition (low complexity). The segment covering 545-555 (STMKKSFKAKK) has biased composition (basic residues).

Interacts (via PxVxL motif) with CBX5.

It is found in the nucleus. The protein resides in the chromosome. Its function is as follows. Component of heterochromatin that maintains heterochromatin integrity during G1/S progression and regulates the duration of G1 phase to critically influence cell proliferative capacity. May play a role in hypoxia-induced oncogenesis. The sequence is that of Heterochromatin protein 1-binding protein 3 (HP1BP3) from Bos taurus (Bovine).